Here is a 235-residue protein sequence, read N- to C-terminus: MHTSALVLFSGGQDSTTCLAQALSKYERVETVAFDYGQRHKVELDARLNVLREIKSRFPHWAPKLGEDHLLDLAVLGQVSDTSLTRDVAFKMENSGLPNTFVPGRNLLFLTLAAALAYRRDLQVLVTGVCETDFSGYPDCRDDTIKAMQLALSLGMDKRFLIETPLMWIDKADTWRLAHALGGQALVDLIIEHTHTCYLGDRTHRQAWGYGCGACPACELRARGYERYAAALSKP.

ATP is bound at residue 9 to 19; sequence FSGGQDSTTCL. Residues Cys197, Cys212, Cys215, and Cys218 each coordinate Zn(2+).

It belongs to the QueC family. Zn(2+) serves as cofactor.

It catalyses the reaction 7-carboxy-7-deazaguanine + NH4(+) + ATP = 7-cyano-7-deazaguanine + ADP + phosphate + H2O + H(+). It participates in purine metabolism; 7-cyano-7-deazaguanine biosynthesis. In terms of biological role, catalyzes the ATP-dependent conversion of 7-carboxy-7-deazaguanine (CDG) to 7-cyano-7-deazaguanine (preQ(0)). The protein is 7-cyano-7-deazaguanine synthase of Polaromonas sp. (strain JS666 / ATCC BAA-500).